The following is a 385-amino-acid chain: 4-hydroxy-3-methylbut-2-en-1-yl diphosphate synthase (flavodoxin) 2 (385 aa).

[4Fe-4S] cluster-binding residues include C280, C283, C315, and E322.

This sequence belongs to the IspG family. The cofactor is [4Fe-4S] cluster.

It carries out the reaction (2E)-4-hydroxy-3-methylbut-2-enyl diphosphate + oxidized [flavodoxin] + H2O + 2 H(+) = 2-C-methyl-D-erythritol 2,4-cyclic diphosphate + reduced [flavodoxin]. It functions in the pathway isoprenoid biosynthesis; isopentenyl diphosphate biosynthesis via DXP pathway; isopentenyl diphosphate from 1-deoxy-D-xylulose 5-phosphate: step 5/6. Converts 2C-methyl-D-erythritol 2,4-cyclodiphosphate (ME-2,4cPP) into 1-hydroxy-2-methyl-2-(E)-butenyl 4-diphosphate. This is 4-hydroxy-3-methylbut-2-en-1-yl diphosphate synthase (flavodoxin) 2 from Streptomyces coelicolor (strain ATCC BAA-471 / A3(2) / M145).